A 483-amino-acid polypeptide reads, in one-letter code: Probable cytochrome P450 517A4 (483 aa).

The chain crosses the membrane as a helical span at residues 1-21; it reads MEIVNVLLFLIILFLVKDFVK. Cysteine 429 provides a ligand contact to heme.

The protein belongs to the cytochrome P450 family. The cofactor is heme.

It localises to the membrane. The sequence is that of Probable cytochrome P450 517A4 (cyp517A4) from Dictyostelium discoideum (Social amoeba).